Consider the following 139-residue polypeptide: Holo-[acyl-carrier-protein] synthase (139 aa).

Asp9 and Glu63 together coordinate Mg(2+).

It belongs to the P-Pant transferase superfamily. AcpS family. It depends on Mg(2+) as a cofactor.

The protein localises to the cytoplasm. The catalysed reaction is apo-[ACP] + CoA = holo-[ACP] + adenosine 3',5'-bisphosphate + H(+). In terms of biological role, transfers the 4'-phosphopantetheine moiety from coenzyme A to a Ser of acyl-carrier-protein. The sequence is that of Holo-[acyl-carrier-protein] synthase from Wigglesworthia glossinidia brevipalpis.